Here is a 485-residue protein sequence, read N- to C-terminus: MKFNSNDRIFISIFLGLAIIYTFPLLTHQSFFVDDLGRSLYGGLGWSGNGRPLSDFIFYIINFGTPIIDASPLPLMLGIVILALALSCIREKLFGDDYITASLCFMMILANPFFIENLSYRYDSLTMCMSVAISIISSYVAYQYKPINIIISSILTIAFLSLYQAALNTYAIFLLAFIISDVVKKNSISNITKNTASSVAGLIVGYFAYSYFIAKRLVTGSYNIEHSKIIEINSSLFEGIISNVLSFYRMFSTILNGDNYLIYYSLFFALIISLIVIVLKAIKRDENKKTKLLLVVLILLASMFFIIGPMIFLKSPIYAPRVLIGMGGFMFFCCLCVFYAFEDKQLISRIYFSFILLISTIFSYGAYNAINAQFQLEESIVNRISQDIDYLGFGRDKKNIKFIGTEPYAPINENIVIKHPLMRELIPRIINNDWMWSEVLMQRNVFSRNYRLYDKEVKLENGWKKSGNNVYDIGVVGETIVVRFN.

10 helical membrane passes run Ile-9–Gln-29, Pro-66–Leu-86, Tyr-98–Leu-118, Val-131–Ile-151, Phe-159–Ile-179, Asn-194–Ala-214, Asn-259–Leu-279, Leu-293–Leu-313, Val-322–Glu-342, and Ile-350–Ile-370.

It localises to the host membrane. This is an uncharacterized protein from Salmonella typhimurium (Bacteriophage P22).